A 341-amino-acid chain; its full sequence is Biotin synthase (341 aa).

Residues 43–266 (SEIQLSQLLS…IAVARIVCPK (224 aa)) form the Radical SAM core domain. [4Fe-4S] cluster is bound by residues Cys-58, Cys-62, and Cys-65. The [2Fe-2S] cluster site is built by Cys-102, Cys-133, Cys-193, and Arg-270.

Belongs to the radical SAM superfamily. Biotin synthase family. In terms of assembly, homodimer. [4Fe-4S] cluster is required as a cofactor. Requires [2Fe-2S] cluster as cofactor.

The catalysed reaction is (4R,5S)-dethiobiotin + (sulfur carrier)-SH + 2 reduced [2Fe-2S]-[ferredoxin] + 2 S-adenosyl-L-methionine = (sulfur carrier)-H + biotin + 2 5'-deoxyadenosine + 2 L-methionine + 2 oxidized [2Fe-2S]-[ferredoxin]. It functions in the pathway cofactor biosynthesis; biotin biosynthesis; biotin from 7,8-diaminononanoate: step 2/2. In terms of biological role, catalyzes the conversion of dethiobiotin (DTB) to biotin by the insertion of a sulfur atom into dethiobiotin via a radical-based mechanism. The polypeptide is Biotin synthase (Caulobacter vibrioides (strain ATCC 19089 / CIP 103742 / CB 15) (Caulobacter crescentus)).